An 879-amino-acid polypeptide reads, in one-letter code: Phosphoenolpyruvate carboxylase (879 aa).

Active-site residues include H138 and K545.

Belongs to the PEPCase type 1 family. The cofactor is Mg(2+).

It catalyses the reaction oxaloacetate + phosphate = phosphoenolpyruvate + hydrogencarbonate. Forms oxaloacetate, a four-carbon dicarboxylic acid source for the tricarboxylic acid cycle. This is Phosphoenolpyruvate carboxylase from Haemophilus influenzae (strain 86-028NP).